Here is a 475-residue protein sequence, read N- to C-terminus: Ubiquilin-like protein (475 aa).

The Ubiquitin-like domain occupies 31-105 (TRVIVKTAGN…IYLVIKSKQG (75 aa)). Disordered stretches follow at residues 113-138 (FRDLPTNDPCHRDRNTKGNSSRVHQP) and 305-325 (QVQSSPPPPPPSQEQQDQLTQ). Residues 129 to 138 (KGNSSRVHQP) show a composition bias toward polar residues.

This Homo sapiens (Human) protein is Ubiquilin-like protein (UBQLNL).